The primary structure comprises 1194 residues: Multidrug efflux ATP-binding/permease protein BCG_0231 (1194 aa).

6 helical membrane passes run 20–40 (LLLGFGAALAGTVIAVLVPLV), 56–76 (LAPWAVVLVAAAGATYLLTYV), 130–150 (LLFDVPNVLRHVLTLLLGVAV), 153–173 (WLSVPLALLAVLLVPVIGLIA), 258–278 (FALGGWMAAQGSITVGTFVAF), and 279–299 (WACLTLLARPACDLAGMLTIA). In terms of domain architecture, ABC transmembrane type-1 1 spans 21–301 (LLGFGAALAG…LAGMLTIAQQ (281 aa)). The ABC transporter 1 domain maps to 334 to 568 (LEFQRVSFGY…CPRYRELLSP (235 aa)). 367–374 (GAPGSGKS) is an ATP binding site. 6 helical membrane-spanning segments follow: residues 628–648 (ALSLLLVAVQTCAGLLPPLLI), 660–680 (VLSALWWAALAGTATVVIRWV), 743–763 (LVVAVISVVTLVGILVALLAI), 765–785 (ARLVLLIFTTMPVLALATWQF), 847–867 (LLALYYPFVALLCSLATTLVL), and 878–898 (VISVGALVTYLLYIELLYTPI). Positions 628–910 (ALSLLLVAVQ…LAQMFDDYQR (283 aa)) constitute an ABC transmembrane type-1 2 domain. One can recognise an ABC transporter 2 domain in the interval 942–1177 (VVFDAVHYSY…GGHYSRLWAA (236 aa)). 976 to 983 (GSTGSGKS) provides a ligand contact to ATP.

It belongs to the ABC transporter superfamily. Lipid exporter (TC 3.A.1.106) family.

Its subcellular location is the cell inner membrane. In terms of biological role, overexpression increases resistance to chloramphenicol, ampicillin, streptomycin, tetracyclin and vancomycin. This chain is Multidrug efflux ATP-binding/permease protein BCG_0231, found in Mycobacterium bovis (strain BCG / Pasteur 1173P2).